A 520-amino-acid polypeptide reads, in one-letter code: Peptide chain release factor 3 (520 aa).

The region spanning 8–273 (EIRKTFAIIS…AYVDHAPMPS (266 aa)) is the tr-type G domain. Residues 17–24 (SHPDAGKT), 85–89 (DTPGH), and 139–142 (NKLD) each bind GTP.

It belongs to the TRAFAC class translation factor GTPase superfamily. Classic translation factor GTPase family. PrfC subfamily.

The protein resides in the cytoplasm. Functionally, increases the formation of ribosomal termination complexes and stimulates activities of RF-1 and RF-2. It binds guanine nucleotides and has strong preference for UGA stop codons. It may interact directly with the ribosome. The stimulation of RF-1 and RF-2 is significantly reduced by GTP and GDP, but not by GMP. This is Peptide chain release factor 3 from Macrococcus caseolyticus (strain JCSC5402) (Macrococcoides caseolyticum).